Reading from the N-terminus, the 488-residue chain is DNA polymerase II small subunit (488 aa).

Belongs to the DNA polymerase delta/II small subunit family. As to quaternary structure, heterodimer of a large subunit and a small subunit.

It carries out the reaction DNA(n) + a 2'-deoxyribonucleoside 5'-triphosphate = DNA(n+1) + diphosphate. The enzyme catalyses Exonucleolytic cleavage in the 3'- to 5'-direction to yield nucleoside 5'-phosphates.. Possesses two activities: a DNA synthesis (polymerase) and an exonucleolytic activity that degrades single-stranded DNA in the 3' to 5' direction. Has a template-primer preference which is characteristic of a replicative DNA polymerase. The protein is DNA polymerase II small subunit (polB) of Thermoplasma acidophilum (strain ATCC 25905 / DSM 1728 / JCM 9062 / NBRC 15155 / AMRC-C165).